The sequence spans 427 residues: Glutamate-1-semialdehyde 2,1-aminomutase (427 aa).

Position 267 is an N6-(pyridoxal phosphate)lysine (Lys267).

Belongs to the class-III pyridoxal-phosphate-dependent aminotransferase family. HemL subfamily. In terms of assembly, homodimer. It depends on pyridoxal 5'-phosphate as a cofactor.

Its subcellular location is the cytoplasm. The enzyme catalyses (S)-4-amino-5-oxopentanoate = 5-aminolevulinate. It functions in the pathway porphyrin-containing compound metabolism; protoporphyrin-IX biosynthesis; 5-aminolevulinate from L-glutamyl-tRNA(Glu): step 2/2. This Geotalea daltonii (strain DSM 22248 / JCM 15807 / FRC-32) (Geobacter daltonii) protein is Glutamate-1-semialdehyde 2,1-aminomutase.